A 180-amino-acid polypeptide reads, in one-letter code: Major urinary protein 5 (180 aa).

The signal sequence occupies residues 1 to 18 (MKLLLLLCLELTLVYVHA). A disulfide bridge connects residues C82 and C175.

The protein belongs to the calycin superfamily. Lipocalin family.

It localises to the secreted. Major urinary proteins (Mups) bind pheromones, and thus stabilize them to allow slow release into the air from urine marks. May protect pheromones from oxidation. May also act as pheromones themselves. In this context, they play a role in the regulation of social behaviors, such as aggression, mating, pup-suckling, territory establishment and dominance. This chain is Major urinary protein 5, found in Mus musculus (Mouse).